The chain runs to 181 residues: Large ribosomal subunit protein uL6 (181 aa).

Belongs to the universal ribosomal protein uL6 family. Part of the 50S ribosomal subunit.

Its function is as follows. This protein binds to the 23S rRNA, and is important in its secondary structure. It is located near the subunit interface in the base of the L7/L12 stalk, and near the tRNA binding site of the peptidyltransferase center. The polypeptide is Large ribosomal subunit protein uL6 (Synechococcus sp. (strain JA-2-3B'a(2-13)) (Cyanobacteria bacterium Yellowstone B-Prime)).